A 141-amino-acid chain; its full sequence is Nucleoside diphosphate kinase (141 aa).

ATP contacts are provided by K11, F59, R87, T93, R104, and N114. The active-site Pros-phosphohistidine intermediate is the H117.

The protein belongs to the NDK family. Homotetramer. Mg(2+) is required as a cofactor.

It is found in the cytoplasm. It catalyses the reaction a 2'-deoxyribonucleoside 5'-diphosphate + ATP = a 2'-deoxyribonucleoside 5'-triphosphate + ADP. It carries out the reaction a ribonucleoside 5'-diphosphate + ATP = a ribonucleoside 5'-triphosphate + ADP. Major role in the synthesis of nucleoside triphosphates other than ATP. The ATP gamma phosphate is transferred to the NDP beta phosphate via a ping-pong mechanism, using a phosphorylated active-site intermediate. This is Nucleoside diphosphate kinase from Legionella pneumophila (strain Lens).